The chain runs to 526 residues: ATP synthase subunit alpha (526 aa).

171-178 provides a ligand contact to ATP; sequence GDRQTGKT.

It belongs to the ATPase alpha/beta chains family. In terms of assembly, F-type ATPases have 2 components, CF(1) - the catalytic core - and CF(0) - the membrane proton channel. CF(1) has five subunits: alpha(3), beta(3), gamma(1), delta(1), epsilon(1). CF(0) has four main subunits: a, b, b' and c.

Its subcellular location is the cell inner membrane. The catalysed reaction is ATP + H2O + 4 H(+)(in) = ADP + phosphate + 5 H(+)(out). Its function is as follows. Produces ATP from ADP in the presence of a proton gradient across the membrane. The alpha chain is a regulatory subunit. This Chlorobium phaeobacteroides (strain BS1) protein is ATP synthase subunit alpha.